Consider the following 549-residue polypeptide: MQNINPTQTNAWKALEQHQKDLEQVTIQQLFEQEPTRFNDYSLKFAEQILVDYSKNNINQQTLSLLRQLAKECALNEATESMFNGEKINRTENRAVLHTALRNCANTPVYVDGKDVMPEVNAVLAKMKSFCQRVISGDWKGYTGKAITDVVNIGIGGSDLGPYMVTEALRPYKNHLTMHFVSNVDGTHIAETLKKVNPETTLFLVASKTFTTQETMTNAISARKWFLAAAQDESQIAKHFAALSTNVKEVEKFGIDTHNMFEFWDWVGGRYSLWSAIGLSIALSIGFDNFEQLLAGAHEMDKHFRTAPMEQNIPITLALIGIWNCNFLGAETEAMLPYDQYLHRFAAYFQQGNMESNGKYVDRSGQVINNYQTGPIIWGEPGTNGQHAFYQLIHQGTKIIPCDFIAPAQTHNVLSDHHNKLLSNFFAQTEALAFGKTQQEVEAEFIQAGKSLDEVKNIVPFKIFTGNKPTNSILVQKITPFTLGALIAMYEHKIFVQGVIFNIYSFDQWGVELGKQLANRILPELVGDEQINSHDSSTNGLINQFKSWR.

The active-site Proton donor is Glu-355. Active-site residues include His-387 and Lys-515.

This sequence belongs to the GPI family.

The protein resides in the cytoplasm. It catalyses the reaction alpha-D-glucose 6-phosphate = beta-D-fructose 6-phosphate. The protein operates within carbohydrate biosynthesis; gluconeogenesis. It participates in carbohydrate degradation; glycolysis; D-glyceraldehyde 3-phosphate and glycerone phosphate from D-glucose: step 2/4. Functionally, catalyzes the reversible isomerization of glucose-6-phosphate to fructose-6-phosphate. The polypeptide is Glucose-6-phosphate isomerase (Histophilus somni (strain 2336) (Haemophilus somnus)).